The chain runs to 226 residues: Brachyurin (226 aa).

Residues 1–223 enclose the Peptidase S1 domain; sequence IVGGVEAVPN…FLDWIQTQTG (223 aa). Cysteine 26 and cysteine 42 are oxidised to a cystine. Residues histidine 41 and aspartate 87 each act as charge relay system in the active site. 2 disulfides stabilise this stretch: cysteine 151–cysteine 164 and cysteine 174–cysteine 200. Serine 178 serves as the catalytic Charge relay system.

It belongs to the peptidase S1 family.

It catalyses the reaction Hydrolysis of proteins, with broad specificity for peptide bonds. Native collagen is cleaved about 75% of the length of the molecule from the N-terminus. Low activity on small molecule substrates of both trypsin and chymotrypsin.. In terms of biological role, this enzyme is a serine protease capable of degrading the native triple helix of collagen. The chain is Brachyurin from Leptuca pugilator (Atlantic sand fiddler crab).